The primary structure comprises 1464 residues: Neuropathy target esterase sws (1464 aa).

Topologically, residues 1 to 34 are lumenal; sequence MDVLELLRASATGCYNTIFSEAWHQYVHKQIAAA. A helical transmembrane segment spans residues 35–55; sequence VYWYGALFLLGVLLFVWFLYF. At 56-1464 the chain is on the cytoplasmic side; sequence KRLARLRLRD…GNTTNNDTKN (1409 aa). 176-303 is a binding site for a nucleoside 3',5'-cyclic phosphate; it reads IFGHFEKPIF…IRVIQVIMIR (128 aa). Disordered regions lie at residues 329 to 393 and 409 to 438; these read NKNS…LHYH and QQQQSLNSPRRNSTAHVSEAAAASTASSPT. Residues 338 to 367 are compositionally biased toward low complexity; sequence TGQTTSNVQSQTSQATQSRPSGTTRTPTSP. Residues 409-420 show a composition bias toward polar residues; sequence QQQQSLNSPRRN. A Phosphoserine modification is found at Ser421. Positions 422–438 are enriched in low complexity; that stretch reads TAHVSEAAAASTASSPT. A nucleoside 3',5'-cyclic phosphate-binding positions include 456–586 and 575–702; these read ELGL…VVRR and IVLG…LSHR. Residues 928–1094 form the PNPLA domain; that stretch reads LVLGGGGARG…VNNLPGHLWR (167 aa). The GXGXXG motif lies at 932 to 937; sequence GGGARG. The GXSXG signature appears at 959–963; it reads GVSIG. Ser961 serves as the catalytic Nucleophile. Catalysis depends on Asp1081, which acts as the Proton acceptor. The DGA/G signature appears at 1081 to 1083; it reads DGG. Ser1175 carries the post-translational modification Phosphoserine. Disordered stretches follow at residues 1352 to 1374 and 1400 to 1464; these read VDKATQSTPTLPDKRSVQTPTPS and ATNT…DTKN. The segment covering 1429–1444 has biased composition (basic and acidic residues); the sequence is KRTEQDEHELEHEQVV. Polar residues predominate over residues 1450-1464; the sequence is MDKQQGNTTNNDTKN.

It belongs to the NTE family. As to quaternary structure, interacts with Pka-C3; interaction inhibits the catalytic function of Pka-C3 and the esterase activity of sws.

It is found in the endoplasmic reticulum membrane. The catalysed reaction is a 1-acyl-sn-glycero-3-phosphocholine + H2O = sn-glycerol 3-phosphocholine + a fatty acid + H(+). In terms of biological role, phospholipase B that deacylates intracellular phosphatidylcholine (PtdCho), generating glycerophosphocholine (GroPtdCho). This deacylation occurs at both sn-2 and sn-1 positions of PtdCho. Its specific chemical modification by certain organophosphorus (OP) compounds leads to distal axonopathy. Plays a role in the signaling mechanism between neurons and glia that regulates glia wrapping during development of the adult brain. Essential for membrane lipid homeostasis and cell survival in both neurons and glia of the adult brain. This is Neuropathy target esterase sws from Drosophila grimshawi (Hawaiian fruit fly).